A 292-amino-acid polypeptide reads, in one-letter code: Phosphatidylglycerol--prolipoprotein diacylglyceryl transferase (292 aa).

Helical transmembrane passes span 24-44 (ISVH…LLIA), 65-85 (FFIW…VLIY), 110-130 (GISG…AIIF), and 136-156 (QSFW…YVFG). An a 1,2-diacyl-sn-glycero-3-phospho-(1'-sn-glycerol)-binding site is contributed by Arg157. The next 3 membrane-spanning stretches (helical) occupy residues 192–212 (SQLF…ICLL), 219–239 (GTLL…CEYF), and 256–276 (GQIL…FVFV).

This sequence belongs to the Lgt family.

Its subcellular location is the cell inner membrane. The catalysed reaction is L-cysteinyl-[prolipoprotein] + a 1,2-diacyl-sn-glycero-3-phospho-(1'-sn-glycerol) = an S-1,2-diacyl-sn-glyceryl-L-cysteinyl-[prolipoprotein] + sn-glycerol 1-phosphate + H(+). It participates in protein modification; lipoprotein biosynthesis (diacylglyceryl transfer). Functionally, catalyzes the transfer of the diacylglyceryl group from phosphatidylglycerol to the sulfhydryl group of the N-terminal cysteine of a prolipoprotein, the first step in the formation of mature lipoproteins. The polypeptide is Phosphatidylglycerol--prolipoprotein diacylglyceryl transferase (Helicobacter hepaticus (strain ATCC 51449 / 3B1)).